A 285-amino-acid chain; its full sequence is Probable endonuclease 4 (285 aa).

Zn(2+)-binding residues include histidine 69, histidine 109, glutamate 145, aspartate 179, histidine 182, histidine 216, aspartate 229, histidine 231, and glutamate 261.

This sequence belongs to the AP endonuclease 2 family. Zn(2+) is required as a cofactor.

It catalyses the reaction Endonucleolytic cleavage to 5'-phosphooligonucleotide end-products.. Its function is as follows. Endonuclease IV plays a role in DNA repair. It cleaves phosphodiester bonds at apurinic or apyrimidinic (AP) sites, generating a 3'-hydroxyl group and a 5'-terminal sugar phosphate. The chain is Probable endonuclease 4 from Yersinia pestis bv. Antiqua (strain Antiqua).